Here is a 301-residue protein sequence, read N- to C-terminus: uncharacterized protein (301 aa).

Disordered stretches follow at residues Asp167–Arg186 and Ala225–Ser244. Residues Leu170–Val181 show a composition bias toward polar residues. Residues Ser226 to Ser237 are compositionally biased toward low complexity.

This is an uncharacterized protein from Mus musculus (Mouse).